Here is a 1125-residue protein sequence, read N- to C-terminus: Phytochrome A (1125 aa).

Composition is skewed to low complexity over residues 1 to 14 (MSSS…SNSA) and 39 to 48 (SGSSFDYSSS). Disordered stretches follow at residues 1-22 (MSSS…SARI) and 38-64 (ESGS…PRSD). A GAF domain is found at 218 to 401 (SMERLCDTMV…VFAIHVNKEL (184 aa)). C323 contacts phytochromobilin. PAS domains are found at residues 617 to 687 (VTSE…LQGK) and 750 to 821 (DYKA…VNLG). In terms of domain architecture, Histidine kinase spans 901–1117 (YLKKQIWNPL…SFIISVELAG (217 aa)).

The protein belongs to the phytochrome family. Homodimer. Post-translationally, contains one covalently linked phytochromobilin chromophore.

Its function is as follows. Regulatory photoreceptor which exists in two forms that are reversibly interconvertible by light: the Pr form that absorbs maximally in the red region of the spectrum and the Pfr form that absorbs maximally in the far-red region. Photoconversion of Pr to Pfr induces an array of morphogenic responses, whereas reconversion of Pfr to Pr cancels the induction of those responses. Pfr controls the expression of a number of nuclear genes including those encoding the small subunit of ribulose-bisphosphate carboxylase, chlorophyll A/B binding protein, protochlorophyllide reductase, rRNA, etc. It also controls the expression of its own gene(s) in a negative feedback fashion. This chain is Phytochrome A (PHYA), found in Populus tremuloides (Quaking aspen).